The primary structure comprises 503 residues: MAKWLNKYFSLGNSKTKSPPQPPRPDYREQRRRGERREQPPQAVPQACSASSASCGSAAACFSASSGSLPDDSGSTSDLIRAYRAQKERDFEDPYNGPGSSLRKLRAMCRLDYCGGGGGGDPGGGQRAFTAAAGAAGCCCAAAGAGAAASSSSSSGSPHLYRSSSERRPTTPAEVRYISPKHRLIKVESASAAGDPPGGVCSGGRTWSPTTCGGKKLLNKCSAEETGAGQKDKVTIADDYSDPFDAKSDLKSKAGKGESAGYMEPYEAQRIMTEFQRQESVRSQHKGIQLYDTPYEPEGQSVDSDSESTVSLRLRESKLPQDDDRPADEYDQPWEWNRVTIPALAAQFNGNEKRQSSPSPSRDRRRQLRAPGGGFKPIKHGSPEFCGILGERVDPTIPLEKQIWYHGAISRSDAENLLRLCKECSYLVRNSQTSKHDYSLSLKSNQGFMHMKLAKTKEKYVLGQNSPPFDSVPEVIHYYTTRKLPIKGAEHLSLLYPVAVRTL.

Disordered stretches follow at residues Met-1 to Ser-49 and Cys-61 to Arg-81. Residue Ser-101 is modified to Phosphoserine. The span at Ala-147–Ser-157 shows a compositional bias: low complexity. The tract at residues Ala-147–Pro-180 is disordered. Residue Lys-186 forms a Glycyl lysine isopeptide (Lys-Gly) (interchain with G-Cter in SUMO2) linkage. Disordered stretches follow at residues Glu-225–Tyr-262, Asp-292–Pro-333, and Ala-345–Gly-381. Positions Phe-244–Lys-256 are enriched in basic and acidic residues. A phosphoserine mark is found at Ser-301 and Ser-311. Positions Ser-301 to Ser-311 are enriched in polar residues. Positions Arg-313 to Asp-328 are enriched in basic and acidic residues. Phosphoserine is present on Ser-382. One can recognise an SH2 domain in the interval Trp-404 to Val-498.

Interacts with phosphorylated 'Tyr-720' of the ligand-activated receptor PDGFRA via its SH2 domain. Interacts with the ligand-activated receptors PDGFRB, FGFR1, KDR/VEGFR2, IL2RB and IL2RG. Interacts with EPS8 and V-SRC. Interacts with GRB2 and GRAP. Interacts with CD3Z. Interacts with tyrosine-phosphorylated LAT upon T-cell antigen receptor activation. Interacts with PLCG1. Interacts with ZAP70, LCP2/SLP-76, VAV1 and GRAP2. Interacts with JAK1 and JAK3. Interacts with PTK2/FAK1. Interacts with CRK/CrKII. Interacts with IRS2. Interacts with PTPN11. In terms of processing, phosphorylated upon PDGFRA, PDGFRB, TCR, IL2 receptor, FGFR1 or VEGFR2 activation. Expressed in heart, liver, brain and kidney (at protein level).

It is found in the cytoplasm. The protein resides in the cell membrane. Adapter protein which regulates several signal transduction cascades by linking activated receptors to downstream signaling components. May play a role in angiogenesis by regulating FGFR1, VEGFR2 and PDGFR signaling. May also play a role in T-cell antigen receptor/TCR signaling, interleukin-2 signaling, apoptosis and neuronal cells differentiation by mediating basic-FGF and NGF-induced signaling cascades. May also regulate IRS1 and IRS2 signaling in insulin-producing cells. The protein is SH2 domain-containing adapter protein B (Shb) of Mus musculus (Mouse).